Consider the following 403-residue polypeptide: Multifunctional CCA protein (403 aa).

ATP contacts are provided by G8 and R11. Residues G8 and R11 each coordinate CTP. Mg(2+) contacts are provided by D21 and D23. ATP contacts are provided by R91, R137, and R140. Residues R91, R137, and R140 each contribute to the CTP site. Residues 228 to 329 (TGIHTLMVAK…LKVLGLLDVW (102 aa)) form the HD domain.

The protein belongs to the tRNA nucleotidyltransferase/poly(A) polymerase family. Bacterial CCA-adding enzyme type 1 subfamily. As to quaternary structure, monomer. Can also form homodimers and oligomers. The cofactor is Mg(2+). Ni(2+) serves as cofactor.

It catalyses the reaction a tRNA precursor + 2 CTP + ATP = a tRNA with a 3' CCA end + 3 diphosphate. It carries out the reaction a tRNA with a 3' CCA end + 2 CTP + ATP = a tRNA with a 3' CCACCA end + 3 diphosphate. In terms of biological role, catalyzes the addition and repair of the essential 3'-terminal CCA sequence in tRNAs without using a nucleic acid template. Adds these three nucleotides in the order of C, C, and A to the tRNA nucleotide-73, using CTP and ATP as substrates and producing inorganic pyrophosphate. tRNA 3'-terminal CCA addition is required both for tRNA processing and repair. Also involved in tRNA surveillance by mediating tandem CCA addition to generate a CCACCA at the 3' terminus of unstable tRNAs. While stable tRNAs receive only 3'-terminal CCA, unstable tRNAs are marked with CCACCA and rapidly degraded. The protein is Multifunctional CCA protein of Vibrio cholerae serotype O1 (strain ATCC 39315 / El Tor Inaba N16961).